Consider the following 228-residue polypeptide: Thermonuclease (228 aa).

The signal sequence occupies residues 1 to 23 (MTEYLLSAGICMAIVSILLIGMA). Positions 24–60 (ISNVSKEQYAKRFFFFATSCLVLTLVVASSLSSSANA) are excised as a propeptide. Residue Asp-100 coordinates Ca(2+). Arg-114 is a catalytic residue. Positions 119 and 120 each coordinate Ca(2+). Active-site residues include Glu-122 and Arg-166.

Belongs to the thermonuclease family. Requires Ca(2+) as cofactor.

Its subcellular location is the secreted. It carries out the reaction Endonucleolytic cleavage to nucleoside 3'-phosphates and 3'-phosphooligonucleotide end-products.. In terms of biological role, enzyme that catalyzes the hydrolysis of both DNA and RNA at the 5' position of the phosphodiester bond. This is Thermonuclease (nuc) from Staphylococcus aureus (strain MRSA252).